Reading from the N-terminus, the 211-residue chain is Outer surface protein C (211 aa).

Positions 1–18 are cleaved as a signal peptide; that stretch reads MKKNTLSAILMTLFLFIS. A lipid anchor (N-palmitoyl cysteine) is attached at Cys19. Cys19 carries S-diacylglycerol cysteine lipidation.

Belongs to the OspC lipoprotein family. Homodimer. Interacts with tick I.ricinus salivary protein Iric-1, Iric-2 and Iric-3. Binds human (host) plasminogen.

Its subcellular location is the cell outer membrane. It localises to the cell surface. Major immunodominant protein in mammalian hosts. Required for initial stages of mammalian infection. Inhibits macrophage-mediated phagocytosis of the bacteria. Binds human plasminogen; this probably confers an extracellular protease activity on the bacteria that allows it to traverse tissue. Interaction with tick I.ricinus salivary protein Salp15 protects the bacteria from antibody-mediated killing in vitro and in vivo. This is Outer surface protein C from Borreliella burgdorferi (Lyme disease spirochete).